A 1407-amino-acid polypeptide reads, in one-letter code: DNA-directed RNA polymerase subunit beta' (1407 aa).

Residues cysteine 70, cysteine 72, cysteine 85, and cysteine 88 each contribute to the Zn(2+) site. Mg(2+) contacts are provided by aspartate 460, aspartate 462, and aspartate 464. 4 residues coordinate Zn(2+): cysteine 814, cysteine 888, cysteine 895, and cysteine 898.

It belongs to the RNA polymerase beta' chain family. As to quaternary structure, the RNAP catalytic core consists of 2 alpha, 1 beta, 1 beta' and 1 omega subunit. When a sigma factor is associated with the core the holoenzyme is formed, which can initiate transcription. Mg(2+) serves as cofactor. The cofactor is Zn(2+).

The catalysed reaction is RNA(n) + a ribonucleoside 5'-triphosphate = RNA(n+1) + diphosphate. In terms of biological role, DNA-dependent RNA polymerase catalyzes the transcription of DNA into RNA using the four ribonucleoside triphosphates as substrates. The protein is DNA-directed RNA polymerase subunit beta' of Cronobacter sakazakii (strain ATCC BAA-894) (Enterobacter sakazakii).